Reading from the N-terminus, the 603-residue chain is Protein SHORT-ROOT 2 (603 aa).

Disordered stretches follow at residues 11–58 and 106–140; these read HHHH…HSHS and DFSSSSSSRQFHSGTGAPSSAPVPPPPSATTSSAG. Residues 31 to 44 show a composition bias toward low complexity; it reads SYPSSRGSTSSPSS. The span at 45 to 58 shows a compositional bias: basic residues; it reads HHTHNHTYYHHSHS. The span at 108–125 shows a compositional bias: low complexity; sequence SSSSSSRQFHSGTGAPSS. The 424-residue stretch at 179–602 folds into the GRAS domain; the sequence is AAPSSSGRWA…QPVVWASAWK (424 aa). The tract at residues 186–249 is leucine repeat I (LRI); the sequence is RWAAQLLMEC…LTTSGPRTLR (64 aa). Positions 268-354 are VHIID; sequence ALKFQELSPW…DTPHLSITTV (87 aa). The VHIID signature appears at 318–322; it reads LHILD. The segment at 370–406 is leucine repeat II (LRII); that stretch reads EIGQRLEKFARLMGVPFSFRAVHHSGDLADLDLAALD. The segment at 416–514 is PFYRE; the sequence is LAVNCVNALR…ERAVGRAIVD (99 aa). Positions 517-602 are SAW; that stretch reads SCPASQSAER…QPVVWASAWK (86 aa).

The protein belongs to the GRAS family. Does not interact with SCR1.

The protein resides in the nucleus. In terms of biological role, putative transcription factor involved in asymmetric cell division. In Oryza sativa subsp. japonica (Rice), this protein is Protein SHORT-ROOT 2 (SHR2).